We begin with the raw amino-acid sequence, 225 residues long: Respiratory nitrate reductase 1 gamma chain (225 aa).

Met1 carries the N-formylmethionine modification. Residues 1-3 (MQF) lie on the Periplasmic side of the membrane. The helical transmembrane segment at 4 to 29 (LNMFFFDIYPYIAGAVFLIGSWLRYD) threads the bilayer. Over 30-47 (YGQYTWRAASSQMLDRKG) the chain is Cytoplasmic. A helical membrane pass occupies residues 48 to 70 (MNLASNLFHIGILGIFVGHFFGM). 2 residues coordinate heme b: His56 and His66. At 71–82 (LTPHWMYEAWLP) the chain is on the periplasmic side. Residues 83 to 112 (IEVKQKMAMFAGGASGVLCLIGGVLLLKRR) form a helical membrane-spanning segment. Over 113–124 (LFSPRVRATTTG) the chain is Cytoplasmic. Residues 125–148 (ADILILSLLVIQCALGLLTIPFSA) traverse the membrane as a helical segment. The Periplasmic segment spans residues 149–182 (QHMDGSEMMKLVGWAQSVVTFHGGASQHLDGVAF). Residues 183–198 (IFRLHLVLGMTLFLLF) traverse the membrane as a helical segment. Positions 187 and 205 each coordinate heme b. The Cytoplasmic segment spans residues 199-225 (PFSRLIHIWSVPVEYLTRKYQLVRARH).

In terms of assembly, dimer of heterotrimers each composed of an alpha, a beta and a gamma chain. Alpha and beta are catalytic chains; gamma chains are involved in binding the enzyme complex to the cytoplasmic membrane. Heme is required as a cofactor.

It localises to the cell inner membrane. The catalysed reaction is nitrate + a quinol = a quinone + nitrite + H2O. The nitrate reductase enzyme complex allows E.coli to use nitrate as an electron acceptor during anaerobic growth. The gamma chain is a membrane-embedded heme-iron unit resembling cytochrome b, which transfers electrons from quinones to the beta subunit. This is Respiratory nitrate reductase 1 gamma chain (narI) from Escherichia coli (strain K12).